Here is a 146-residue protein sequence, read N- to C-terminus: Gonadotropin subunit beta-2 (146 aa).

The N-terminal stretch at 1-28 (TGTPVKILVVRNILLLLFCLVVLLVFAQ) is a signal peptide. Disulfide bonds link Cys-35–Cys-83, Cys-49–Cys-98, Cys-52–Cys-136, Cys-60–Cys-114, Cys-64–Cys-116, and Cys-119–Cys-126. Asn-39 is a glycosylation site (N-linked (GlcNAc...) asparagine).

This sequence belongs to the glycoprotein hormones subunit beta family. As to quaternary structure, heterodimer of an alpha and a beta chain.

Its subcellular location is the secreted. Its function is as follows. Involved in gametogenesis and steroidogenesis. The polypeptide is Gonadotropin subunit beta-2 (cgbb) (Ctenopharyngodon idella (Grass carp)).